The sequence spans 218 residues: GTP cyclohydrolase 1 (218 aa).

Residues Cys-109, His-112, and Cys-180 each coordinate Zn(2+).

It belongs to the GTP cyclohydrolase I family. As to quaternary structure, toroid-shaped homodecamer, composed of two pentamers of five dimers.

The catalysed reaction is GTP + H2O = 7,8-dihydroneopterin 3'-triphosphate + formate + H(+). The protein operates within cofactor biosynthesis; 7,8-dihydroneopterin triphosphate biosynthesis; 7,8-dihydroneopterin triphosphate from GTP: step 1/1. The protein is GTP cyclohydrolase 1 (folE) of Haemophilus influenzae (strain ATCC 51907 / DSM 11121 / KW20 / Rd).